Consider the following 122-residue polypeptide: Large ribosomal subunit protein uL14 (122 aa).

Belongs to the universal ribosomal protein uL14 family. Part of the 50S ribosomal subunit. Forms a cluster with proteins L3 and L19. In the 70S ribosome, L14 and L19 interact and together make contacts with the 16S rRNA in bridges B5 and B8.

In terms of biological role, binds to 23S rRNA. Forms part of two intersubunit bridges in the 70S ribosome. The sequence is that of Large ribosomal subunit protein uL14 from Streptococcus pneumoniae (strain JJA).